The primary structure comprises 185 residues: UPF0215 protein APE_0476.1 (185 aa).

This sequence belongs to the UPF0215 family.

In Aeropyrum pernix (strain ATCC 700893 / DSM 11879 / JCM 9820 / NBRC 100138 / K1), this protein is UPF0215 protein APE_0476.1.